Consider the following 323-residue polypeptide: tRNA U34 carboxymethyltransferase (323 aa).

Carboxy-S-adenosyl-L-methionine is bound by residues K91, W105, K110, G130, 181 to 182 (IE), M196, Y200, and R315.

Belongs to the class I-like SAM-binding methyltransferase superfamily. CmoB family. In terms of assembly, homotetramer.

It catalyses the reaction carboxy-S-adenosyl-L-methionine + 5-hydroxyuridine(34) in tRNA = 5-carboxymethoxyuridine(34) in tRNA + S-adenosyl-L-homocysteine + H(+). Its function is as follows. Catalyzes carboxymethyl transfer from carboxy-S-adenosyl-L-methionine (Cx-SAM) to 5-hydroxyuridine (ho5U) to form 5-carboxymethoxyuridine (cmo5U) at position 34 in tRNAs. This Yersinia pestis bv. Antiqua (strain Antiqua) protein is tRNA U34 carboxymethyltransferase.